The following is a 561-amino-acid chain: Putative transport protein YbjL (561 aa).

A run of 5 helical transmembrane segments spans residues 8 to 28 (LLNGNYILLLFVVLALGLCLG), 32 to 52 (LGSVQLGNSIGVLVVSLLLGQ), 66 to 86 (FMLFIFCVGVEAGPNFFSIFF), 94 to 114 (MLALVMVGSALLIALGLGKLF), and 158 to 178 (NLSLGYALTYLIGLVSLIVGA). RCK C-terminal domains follow at residues 200–288 (RGLD…SFRN) and 292–373 (VFDR…RIGF). A run of 5 helical transmembrane segments spans residues 383–403 (LLAFCAFFIIGLMIGMITFQF), 406–426 (FSFGIGNAAGLLFAGIMLGFL), 447–467 (FGLMVFMAGVGLSAGSGISNG), 475–495 (MLIAGLVVSLVPVVICFLFGA), and 540–560 (AIANVLLTLAGTLIVIIWPGL).

Belongs to the AAE transporter (TC 2.A.81) family. YbjL subfamily.

The protein resides in the cell membrane. This chain is Putative transport protein YbjL, found in Salmonella dublin (strain CT_02021853).